The primary structure comprises 110 residues: Phosphoribosyl-ATP pyrophosphatase (110 aa).

This sequence belongs to the PRA-PH family.

The protein localises to the cytoplasm. It catalyses the reaction 1-(5-phospho-beta-D-ribosyl)-ATP + H2O = 1-(5-phospho-beta-D-ribosyl)-5'-AMP + diphosphate + H(+). Its pathway is amino-acid biosynthesis; L-histidine biosynthesis; L-histidine from 5-phospho-alpha-D-ribose 1-diphosphate: step 2/9. The polypeptide is Phosphoribosyl-ATP pyrophosphatase (Pseudomonas fluorescens (strain ATCC BAA-477 / NRRL B-23932 / Pf-5)).